The chain runs to 221 residues: Toll/interleukin-1 receptor domain-containing adapter protein (221 aa).

A disordered region spans residues 1-82; the sequence is MASSTSLPAP…HASDSGSSRW (82 aa). Positions 48-67 are enriched in low complexity; sequence SQPTSQDSPLPPSLSSVTSP. Residues 84–213 form the TIR domain; the sequence is KDYDVCVCHS…GGFRQVKEAV (130 aa). Disulfide bonds link cysteine 89-cysteine 134 and cysteine 142-cysteine 174.

Homodimer. Also forms heterodimers with MYD88. May interact with PIK3AP1. Interacts with TLR4 and IRAK2 via their respective TIR domains. Interacts with BMX and TBK1. Interacts with EIF2AK2. Does not interact with IRAK1, nor TLR9. Interacts with TLR2. Interacts with RAGE/AGER. As to quaternary structure, (Microbial infection) In case of infection, interacts with B.melitensis protein TcpB (AC Q8YF53); TcpB abolishes the TLR4-TIRAP interaction and downstream signaling. Phosphorylated by IRAK1 and IRAK4. Also phosphorylated by BTK. Post-translationally, polyubiquitinated. Polyubiquitination follows phosphorylation by BTK and leads to TIRAP degradation. As to expression, highly expressed in liver, kidney, spleen, skeletal muscle and heart. Also detected in peripheral blood leukocytes, lung, placenta, small intestine, thymus, colon and brain.

The protein localises to the cytoplasm. It localises to the cell membrane. Its subcellular location is the membrane. Functionally, adapter involved in TLR2, TLR4 and RAGE signaling pathways in the innate immune response. Acts via IRAK2 and TRAF-6, leading to the activation of NF-kappa-B, MAPK1, MAPK3 and JNK, and resulting in cytokine secretion and the inflammatory response. Positively regulates the production of TNF-alpha (TNF) and interleukin-6 (IL6). This chain is Toll/interleukin-1 receptor domain-containing adapter protein (TIRAP), found in Homo sapiens (Human).